Consider the following 290-residue polypeptide: HTH-type transcriptional activator RhaR (290 aa).

One can recognise an HTH araC/xylS-type domain in the interval 179–277 (DLIMSALQQS…GMTPRDYRQR (99 aa)). 2 DNA-binding regions (H-T-H motif) span residues 196–217 (ADFCHKNQLVERSLKQLFRQQT) and 244–267 (ISDIAARCGFEDSNYFSAVFTREA).

Binds DNA as a dimer.

Its subcellular location is the cytoplasm. In terms of biological role, activates expression of the rhaSR operon in response to L-rhamnose. In Yersinia pseudotuberculosis serotype O:1b (strain IP 31758), this protein is HTH-type transcriptional activator RhaR.